We begin with the raw amino-acid sequence, 396 residues long: 1-deoxy-D-xylulose 5-phosphate reductoisomerase (396 aa).

The NADPH site is built by threonine 13, glycine 14, serine 15, isoleucine 16, and asparagine 127. Position 128 (lysine 128) interacts with 1-deoxy-D-xylulose 5-phosphate. Glutamate 129 contributes to the NADPH binding site. Residue aspartate 153 participates in Mn(2+) binding. The 1-deoxy-D-xylulose 5-phosphate site is built by serine 154, glutamate 155, serine 184, and histidine 207. Residue glutamate 155 participates in Mn(2+) binding. Glycine 213 serves as a coordination point for NADPH. Serine 220, asparagine 225, lysine 226, and glutamate 229 together coordinate 1-deoxy-D-xylulose 5-phosphate. Residue glutamate 229 participates in Mn(2+) binding.

It belongs to the DXR family. Mg(2+) serves as cofactor. The cofactor is Mn(2+).

The enzyme catalyses 2-C-methyl-D-erythritol 4-phosphate + NADP(+) = 1-deoxy-D-xylulose 5-phosphate + NADPH + H(+). Its pathway is isoprenoid biosynthesis; isopentenyl diphosphate biosynthesis via DXP pathway; isopentenyl diphosphate from 1-deoxy-D-xylulose 5-phosphate: step 1/6. Its function is as follows. Catalyzes the NADPH-dependent rearrangement and reduction of 1-deoxy-D-xylulose-5-phosphate (DXP) to 2-C-methyl-D-erythritol 4-phosphate (MEP). This Pseudomonas savastanoi pv. phaseolicola (strain 1448A / Race 6) (Pseudomonas syringae pv. phaseolicola (strain 1448A / Race 6)) protein is 1-deoxy-D-xylulose 5-phosphate reductoisomerase.